Consider the following 456-residue polypeptide: MTASLWQQCLNRLQDELPSAEFSMWIRPLQAELSDNTLTLYAPNRFVLDWVRDKYLIRVNGIINELCGVDGPTLRFDIGNRPHPVAVARAPARGADPVNNSQKSWESKAEAKPEPNHKSNTNVNYTFENFVEGKSNQLARAAARQVADNPGGAYNPLFLYGGTGLGKTHLLHAVGNAIKERKQDAKVIYMHSERFVQDMVKALQNNAIEEFKRYYRSVDALLIDDIQFFANKERSQEEFFHTFNALLEGNQQIILTSDRYPKEINGVEDRLKSRFGWGLTVAIEPPELETRVAILMRKADENQIHLPDEVAFFIAKRLRSNVRELEGALNRVIANANFTGRAINIDFVREALRDLLALQEKLVTIDNIQKTVAEYYKIKLADLLSKRRSRSVARPRQLAMALAKELTNHSLPEIGDAFGGRDHTTVLHACRKIEQLKEESHDIKEDYSNLIRTLSS.

The segment at 1 to 83 is domain I, interacts with DnaA modulators; it reads MTASLWQQCL…LRFDIGNRPH (83 aa). Residues 83–119 are domain II; that stretch reads HPVAVARAPARGADPVNNSQKSWESKAEAKPEPNHKS. The tract at residues 92-122 is disordered; that stretch reads ARGADPVNNSQKSWESKAEAKPEPNHKSNTN. The span at 105 to 117 shows a compositional bias: basic and acidic residues; it reads WESKAEAKPEPNH. The segment at 120–336 is domain III, AAA+ region; the sequence is NTNVNYTFEN…GALNRVIANA (217 aa). Gly-164, Gly-166, Lys-167, and Thr-168 together coordinate ATP. Positions 337–456 are domain IV, binds dsDNA; it reads NFTGRAINID…YSNLIRTLSS (120 aa).

The protein belongs to the DnaA family. As to quaternary structure, oligomerizes as a right-handed, spiral filament on DNA at oriC.

The protein resides in the cytoplasm. Plays an essential role in the initiation and regulation of chromosomal replication. ATP-DnaA binds to the origin of replication (oriC) to initiate formation of the DNA replication initiation complex once per cell cycle. Binds the DnaA box (a 9 base pair repeat at the origin) and separates the double-stranded (ds)DNA. Forms a right-handed helical filament on oriC DNA; dsDNA binds to the exterior of the filament while single-stranded (ss)DNA is stabiized in the filament's interior. The ATP-DnaA-oriC complex binds and stabilizes one strand of the AT-rich DNA unwinding element (DUE), permitting loading of DNA polymerase. After initiation quickly degrades to an ADP-DnaA complex that is not apt for DNA replication. Binds acidic phospholipids. In Aeromonas hydrophila subsp. hydrophila (strain ATCC 7966 / DSM 30187 / BCRC 13018 / CCUG 14551 / JCM 1027 / KCTC 2358 / NCIMB 9240 / NCTC 8049), this protein is Chromosomal replication initiator protein DnaA.